The sequence spans 83 residues: uncharacterized protein (83 aa).

This is an uncharacterized protein from Escherichia coli (strain K12).